The sequence spans 671 residues: Amidase chry2 (671 aa).

Cysteine 2 serves as the catalytic Nucleophile. In terms of domain architecture, Glutamine amidotransferase type-2 spans 2–220; it reads CGISAFITHP…PGHYLICRPN (219 aa). Positions 251–639 constitute an Asparagine synthetase domain; it reads VRERLLEAVR…TQDAMDGAFN (389 aa).

It belongs to the asparagine synthetase family.

The protein operates within pigment biosynthesis. Functionally, amidase; part of the gene cluster that mediates the biosynthesis of the yellow pigment chrysogine. Pyruvic acid and anthranilic acid are likely substrates for the nonribosomal peptide synthetase chry1/NRPS14, with pyruvic acid adenylated by the first A domain and anthranilic acid by the second. If pyruvic acid and anthranilic acid are merged and released from chry1/NRPS14 by hydrolysis, a subsequent amidation would lead to 2-pyruvoylaminobenzamide. This process is probably catalyzed by the amidotransferase chry2 using glutamine as amino donor. The dehydrogenase chry5 that has a terminal berberine bridge domain for C-N cyclization could catalyze the cyclization of 2-pyruvoylaminobenzamide to yield acetyl-4(3H)-quinazolidinone. A final reduction of acetyl-4(3H)-quinazolidinone catalyzed by the oxidoreductase chry4 would result in chrysogine. This chain is Amidase chry2, found in Gibberella zeae (strain ATCC MYA-4620 / CBS 123657 / FGSC 9075 / NRRL 31084 / PH-1) (Wheat head blight fungus).